We begin with the raw amino-acid sequence, 275 residues long: Large ribosomal subunit protein uL2 (275 aa).

Positions 208 to 275 are disordered; that stretch reads AGAKRWRGRR…NMIIRDRRKK (68 aa). Basic residues-rich tracts occupy residues 209-219 and 254-263; these read GAKRWRGRRPT and KGYKTRRNKR.

Belongs to the universal ribosomal protein uL2 family. Part of the 50S ribosomal subunit. Forms a bridge to the 30S subunit in the 70S ribosome.

Functionally, one of the primary rRNA binding proteins. Required for association of the 30S and 50S subunits to form the 70S ribosome, for tRNA binding and peptide bond formation. It has been suggested to have peptidyltransferase activity; this is somewhat controversial. Makes several contacts with the 16S rRNA in the 70S ribosome. The chain is Large ribosomal subunit protein uL2 from Coxiella burnetii (strain CbuK_Q154) (Coxiella burnetii (strain Q154)).